A 141-amino-acid polypeptide reads, in one-letter code: Protein X (141 aa).

Residues 22–52 form a disordered region; sequence GPQSSGPPFPRPAAGSAASSASSPSPSDESD. Low complexity predominate over residues 33 to 48; the sequence is PAAGSAASSASSPSPS. A mitochondrial targeting sequence region spans residues 68-113; that stretch reads PCCLVFTCADLRTMDSTVNFVSWHAKRQLGMPSKDLWTPYIKDQLL.

It belongs to the orthohepadnavirus protein X family. As to quaternary structure, may form homodimer. May interact with host CEBPA, CFLAR, CREB1, DDB1, E4F1, HBXIP, HSPD1/HSP60, NFKBIA, POLR2E and SMAD4. Interacts with host SMC5-SMC6 complex and induces its degradation. Interacts with host TRPC4AP; leading to prevent ubiquitination of TRPC4AP. Interacts with host PLSCR1; this interaction promotes ubiquitination and degradation of HBx and impairs HBx-mediated cell proliferation. In terms of processing, a fraction may be phosphorylated in insect cells and HepG2 cells, a human hepatoblastoma cell line. Phosphorylated in vitro by host protein kinase C or mitogen-activated protein kinase. N-acetylated in insect cells.

Its subcellular location is the host cytoplasm. It localises to the host nucleus. It is found in the host mitochondrion. Its function is as follows. Multifunctional protein that plays a role in silencing host antiviral defenses and promoting viral transcription. Does not seem to be essential for HBV infection. May be directly involved in development of cirrhosis and liver cancer (hepatocellular carcinoma). Most of cytosolic activities involve modulation of cytosolic calcium. The effect on apoptosis is controversial depending on the cell types in which the studies have been conducted. May induce apoptosis by localizing in mitochondria and causing loss of mitochondrial membrane potential. May also modulate apoptosis by binding host CFLAR, a key regulator of the death-inducing signaling complex (DISC). Promotes viral transcription by using the host E3 ubiquitin ligase DDB1 to target the SMC5-SMC6 complex to proteasomal degradation. This host complex would otherwise bind to viral episomal DNA, and prevents its transcription. Moderately stimulates transcription of many different viral and cellular transcription elements. Promoters and enhancers stimulated by HBx contain DNA binding sites for NF-kappa-B, AP-1, AP-2, c-EBP, ATF/CREB, or the calcium-activated factor NF-AT. The sequence is that of Protein X from Woodchuck hepatitis B virus (isolate w64/pWS23) (WHV).